We begin with the raw amino-acid sequence, 479 residues long: Ribulose bisphosphate carboxylase large chain (479 aa).

The propeptide occupies 1 to 2; sequence MS. P3 bears the N-acetylproline mark. Substrate is bound by residues T65, N123, 173–177, and 201–204; these read TIKPK and KDDE. Residue K175 is the Proton acceptor of the active site. Residues K201, D203, and E204 each coordinate Mg(2+). N6-carboxylysine is present on K201. S208 bears the Phosphoserine mark. H294 (proton acceptor) is an active-site residue. Substrate-binding positions include 294-295 and H327; that span reads HR. T330 carries the phosphothreonine modification. Residues K334 and 379–381 contribute to the substrate site; that span reads SGG.

It belongs to the RuBisCO large chain family. Type I subfamily. As to quaternary structure, heterohexadecamer of 8 large chains and 8 small chains; disulfide-linked. The disulfide link is formed within the large subunit homodimers. Interacts with RBCX1 and RBCX1. An intermediate complex made of eight RbcL subunits interacts with the chaperone BSD2. The cofactor is Mg(2+). The disulfide bond which can form in the large chain dimeric partners within the hexadecamer appears to be associated with oxidative stress and protein turnover.

It localises to the plastid. It is found in the chloroplast. It catalyses the reaction 2 (2R)-3-phosphoglycerate + 2 H(+) = D-ribulose 1,5-bisphosphate + CO2 + H2O. The catalysed reaction is D-ribulose 1,5-bisphosphate + O2 = 2-phosphoglycolate + (2R)-3-phosphoglycerate + 2 H(+). Its function is as follows. RuBisCO catalyzes two reactions: the carboxylation of D-ribulose 1,5-bisphosphate, the primary event in carbon dioxide fixation, as well as the oxidative fragmentation of the pentose substrate in the photorespiration process. Both reactions occur simultaneously and in competition at the same active site. Binds to abscisic acid (ABA). In Arabidopsis thaliana (Mouse-ear cress), this protein is Ribulose bisphosphate carboxylase large chain.